Consider the following 498-residue polypeptide: Minor fimbrium subunit Mfa1 (498 aa).

The signal sequence occupies residues 1–19; sequence MKLNKMFLVGALLSLGFAS. Residue Cys-20 is the site of N-palmitoyl cysteine attachment. A lipid anchor (S-diacylglycerol cysteine) is attached at Cys-20. The propeptide occupies 20–50; that stretch reads CSKEGNGPAPDSSSTADTHMSVSMSLPQHNR. The interval 436–476 is disordered; sequence SGNPFVPTDPDPNNPDTPDNPDTPDPEDPDTPNPEEPLPVQ.

It belongs to the bacteroidetes fimbrillin superfamily. FimA/Mfa1 family. Structural component of the fimbrial stalk. Minor fimbriae are composed of a structural subunit, most often Mfa1, and the accessory subunits Mfa3, Mfa4 and Mfa5. Mfa1 interacts with Mfa2; this anchors the fimbrium in the membrane. Fimbrium assembly occurs by linear, head-to-tail oligomerization of fimbrial subunits. This is mediated via insertion of a C-terminal beta-strand from one subunit into a groove in the N-terminal domain of the following subunit.

It is found in the fimbrium. Its subcellular location is the cell outer membrane. Structural subunit of the minor fimbriae. These filamentous pili are attached to the cell surface; they mediate biofilm formation, adhesion onto host cells and onto other bacteria that are part of the oral microbiome. They play an important role in invasion of periodontal tissues and are recognized as major virulence factors. Mfa1 orthologs from different strains have highly divergent sequences, and this correlates with pathogenicity. This chain is Minor fimbrium subunit Mfa1, found in Porphyromonas gingivalis (Bacteroides gingivalis).